The primary structure comprises 520 residues: Keratin, type II cytoskeletal 72 (520 aa).

A head region spans residues 1–133; sequence MSRQLTLYPG…DPEIQKVRAQ (133 aa). A coil 1A region spans residues 134–169; it reads EREQIKALNNKFASFIDKVRFLEQQNQVLETKWELL. An IF rod domain is found at 134–447; the sequence is EREQIKALNN…KLLESEESRM (314 aa). Residues 170 to 188 form a linker 1 region; it reads QQLDQNNSRRSLEPVHESY. Residues 189–280 form a coil 1B region; sequence ISNLQKQLEI…VLFEGEIAQM (92 aa). Residues 281-304 form a linker 12 region; that stretch reads QSHISDTSVILSMDNNRQLDLDSI. The tract at residues 305–443 is coil 2; the sequence is LAEVRAQYEE…ATYRKLLESE (139 aa). A tail region spans residues 444-520; the sequence is ESRMAGEYPS…SSCVSKKASR (77 aa). Residues 495–520 are disordered; that stretch reads GSCGSELKDPPAKTSASSCVSKKASR.

It belongs to the intermediate filament family. Heterotetramer of two type I and two type II keratins.

Functionally, has a role in hair formation. Specific component of keratin intermediate filaments in the inner root sheath (IRS) of the hair follicle. The chain is Keratin, type II cytoskeletal 72 (Krt72) from Rattus norvegicus (Rat).